The chain runs to 88 residues: Small ribosomal subunit protein uS15c (88 aa).

Belongs to the universal ribosomal protein uS15 family. In terms of assembly, part of the 30S ribosomal subunit.

The protein resides in the plastid. It localises to the chloroplast. This Physcomitrium patens (Spreading-leaved earth moss) protein is Small ribosomal subunit protein uS15c (rps15).